The following is a 593-amino-acid chain: Aspartate--tRNA(Asp/Asn) ligase (593 aa).

Residue Glu176 coordinates L-aspartate. Residues 200–203 (QIFK) form an aspartate region. Residue Arg222 coordinates L-aspartate. ATP-binding positions include 222-224 (RDE) and Gln231. L-aspartate is bound at residue His450. Glu490 provides a ligand contact to ATP. Arg497 serves as a coordination point for L-aspartate. 542–545 (GLDR) contributes to the ATP binding site.

The protein belongs to the class-II aminoacyl-tRNA synthetase family. Type 1 subfamily. As to quaternary structure, homodimer.

It is found in the cytoplasm. It catalyses the reaction tRNA(Asx) + L-aspartate + ATP = L-aspartyl-tRNA(Asx) + AMP + diphosphate. Functionally, aspartyl-tRNA synthetase with relaxed tRNA specificity since it is able to aspartylate not only its cognate tRNA(Asp) but also tRNA(Asn). Reaction proceeds in two steps: L-aspartate is first activated by ATP to form Asp-AMP and then transferred to the acceptor end of tRNA(Asp/Asn). This is Aspartate--tRNA(Asp/Asn) ligase from Symbiobacterium thermophilum (strain DSM 24528 / JCM 14929 / IAM 14863 / T).